Here is a 625-residue protein sequence, read N- to C-terminus: Arginine--tRNA ligase (625 aa).

Residues 128–138 carry the 'HIGH' region motif; the sequence is VNPTKPLHMGH.

This sequence belongs to the class-I aminoacyl-tRNA synthetase family.

Its subcellular location is the cytoplasm. It carries out the reaction tRNA(Arg) + L-arginine + ATP = L-arginyl-tRNA(Arg) + AMP + diphosphate. The chain is Arginine--tRNA ligase (argS) from Pyrococcus abyssi (strain GE5 / Orsay).